The chain runs to 131 residues: Small ribosomal subunit protein uS11 (131 aa).

It belongs to the universal ribosomal protein uS11 family. Part of the 30S ribosomal subunit. Interacts with proteins S7 and S18. Binds to IF-3.

In terms of biological role, located on the platform of the 30S subunit, it bridges several disparate RNA helices of the 16S rRNA. Forms part of the Shine-Dalgarno cleft in the 70S ribosome. The protein is Small ribosomal subunit protein uS11 of Helicobacter pylori (strain Shi470).